The primary structure comprises 152 residues: Probable ribose-5-phosphate isomerase B (152 aa).

10–11 (DH) serves as a coordination point for D-ribulose 5-phosphate. Cys-69 serves as the catalytic Proton acceptor. D-ribulose 5-phosphate is bound at residue 70–74 (GTGVG). Catalysis depends on His-102, which acts as the Proton donor. D-ribulose 5-phosphate-binding residues include Asp-103, Arg-113, Arg-136, and Arg-140.

This sequence belongs to the LacAB/RpiB family. In terms of assembly, homodimer.

The catalysed reaction is aldehydo-D-ribose 5-phosphate = D-ribulose 5-phosphate. It functions in the pathway carbohydrate degradation; pentose phosphate pathway; D-ribose 5-phosphate from D-ribulose 5-phosphate (non-oxidative stage): step 1/1. Its function is as follows. Catalyzes the interconversion of ribulose-5-P and ribose-5-P. This chain is Probable ribose-5-phosphate isomerase B, found in Mycoplasma genitalium (strain ATCC 33530 / DSM 19775 / NCTC 10195 / G37) (Mycoplasmoides genitalium).